We begin with the raw amino-acid sequence, 186 residues long: Adenylate kinase (186 aa).

Residue 10-15 (GSGKGT) coordinates ATP. Positions 30–55 (ATGDVFRERMKTDMALRDIVSSGGYV) are NMP. AMP contacts are provided by residues Thr31, Arg36, 53–55 (GYV), 81–84 (GYPR), and Gln88. The LID stretch occupies residues 122-132 (ARSKESGRTDD). Arg123 contacts ATP. Residues Arg129 and Arg140 each contribute to the AMP site. Lys168 is an ATP binding site.

The protein belongs to the adenylate kinase family. Monomer.

Its subcellular location is the cytoplasm. The catalysed reaction is AMP + ATP = 2 ADP. It functions in the pathway purine metabolism; AMP biosynthesis via salvage pathway; AMP from ADP: step 1/1. Its function is as follows. Catalyzes the reversible transfer of the terminal phosphate group between ATP and AMP. Plays an important role in cellular energy homeostasis and in adenine nucleotide metabolism. The protein is Adenylate kinase of Tropheryma whipplei (strain TW08/27) (Whipple's bacillus).